A 181-amino-acid chain; its full sequence is Adenine phosphoribosyltransferase (181 aa).

It belongs to the purine/pyrimidine phosphoribosyltransferase family. Homodimer.

The protein localises to the cytoplasm. The enzyme catalyses AMP + diphosphate = 5-phospho-alpha-D-ribose 1-diphosphate + adenine. It participates in purine metabolism; AMP biosynthesis via salvage pathway; AMP from adenine: step 1/1. Functionally, catalyzes a salvage reaction resulting in the formation of AMP, that is energically less costly than de novo synthesis. This is Adenine phosphoribosyltransferase from Rhodopseudomonas palustris (strain ATCC BAA-98 / CGA009).